Reading from the N-terminus, the 3508-residue chain is WD repeat and FYVE domain-containing protein 3 (3508 aa).

S1942 and S2277 each carry phosphoserine. Disordered stretches follow at residues F2279–P2303 and S2441–D2504. Positions L2284–R2963 are sufficient for translocalization to p62 bodies/ALIS. Residues E2450–A2459 are compositionally biased toward basic and acidic residues. S2474 carries the post-translational modification Phosphoserine. A BEACH-type PH domain is found at E2513 to L2638. The segment at M2568–C3508 is interaction with SQSTM1. The region spanning G2665–K2958 is the BEACH domain. Positions R2963–C3508 are interaction with ATG5. WD repeat units lie at residues S3059–K3097, G3107–Q3146, G3149–N3188, and G3192–T3236. Positions A3254–S3317 are disordered. Acidic residues predominate over residues Q3261–E3272. Phosphoserine occurs at positions 3317 and 3321. The short motif at D3326 to V3331 is the LIR element. The stretch at T3390–A3429 is one WD 5 repeat. The FYVE-type zinc finger occupies D3436–Q3496. Zn(2+) contacts are provided by C3442, C3445, C3458, C3461, C3466, C3469, C3488, and C3491.

Directly interacts with ATG5 and associates with the ATG12-ATG5-ATG16L complex. Interacts with p62/SQSTM1. Directly interacts with GABARAP, GABARAPL1 and GABARAPL2; the interaction with GABARAP is required for WDFY3 recruitment to MAP1LC3B-positive p62/SQSTM1 bodies. Weakly interacts with MAP1LC3C; this interaction is direct. Does not interact with MAP1LC3A, nor MAP1LC3B. Interacts with TRAF6. Widely expressed, with high levels in the brain (at protein level). In the brain, expressed by both neuronal and non-neuronal cells. Expressed in bones, in the periosteum, cartilage, growth plate, trabeculae of the primary spongiosa, and scattered hematopoietic cells within the medullary cavity. Tends to be expressed at lower levels in the hypertrophic zone compared to trabeculae. Expressed in osteoblasts, osteoclasts and bone-marrow derived macrophages.

The protein resides in the nucleus. The protein localises to the cytoplasm. It localises to the cytosol. Its subcellular location is the PML body. It is found in the membrane. The protein resides in the perikaryon. The protein localises to the cell projection. It localises to the axon. Functionally, required for selective macroautophagy (aggrephagy). Acts as an adapter protein by linking specific proteins destined for degradation to the core autophagic machinery members, such as the ATG5-ATG12-ATG16L E3-like ligase, SQSTM1 and LC3. Involved in the formation and autophagic degradation of cytoplasmic ubiquitin-containing inclusions (p62 bodies, ALIS/aggresome-like induced structures). Important for normal brain development. Essential for the formation of axonal tracts throughout the brain and spinal cord, including the formation of the major forebrain commissures. Involved in the ability of neural cells to respond to guidance cues. Required for cortical neurons to respond to the trophic effects of netrin-1/NTN1. Regulates Wnt signaling through the removal of DVL3 aggregates, likely in an autophagy-dependent manner. This process may be important for the determination of brain size during embryonic development. May regulate osteoclastogenesis by acting on the TNFSF11/RANKL - TRAF6 pathway. After cytokinetic abscission, involved in midbody remnant degradation. In vitro strongly binds to phosphatidylinositol 3-phosphate (PtdIns3P). The sequence is that of WD repeat and FYVE domain-containing protein 3 (Wdfy3) from Mus musculus (Mouse).